A 138-amino-acid chain; its full sequence is uncharacterized protein (138 aa).

The signal sequence occupies residues 1-35 (MVAPAARVFLRAVRAALTSTVPDLLCLLARGSPRG).

As to expression, isoform 1 is highly expressed in small intestine, testis and kidney, medium expressed in brain and heart and low expressed in colon; it could not be detected in liver, adrenal gland and pancreas.

It is found in the secreted. This is an uncharacterized protein from Homo sapiens (Human).